Reading from the N-terminus, the 382-residue chain is Galactokinase (382 aa).

34 to 37 (EHTD) serves as a coordination point for substrate. Residue 124 to 130 (GAGLSSS) coordinates ATP. Residues Ser-130 and Glu-162 each coordinate Mg(2+). Catalysis depends on Asp-174, which acts as the Proton acceptor. Tyr-223 provides a ligand contact to substrate.

The protein belongs to the GHMP kinase family. GalK subfamily.

The protein resides in the cytoplasm. The enzyme catalyses alpha-D-galactose + ATP = alpha-D-galactose 1-phosphate + ADP + H(+). Its pathway is carbohydrate metabolism; galactose metabolism. Functionally, catalyzes the transfer of the gamma-phosphate of ATP to D-galactose to form alpha-D-galactose-1-phosphate (Gal-1-P). This is Galactokinase from Escherichia coli O1:K1 / APEC.